A 143-amino-acid chain; its full sequence is Hemoglobin subunit alpha-1 (143 aa).

At Ser2 the chain carries N-acetylserine. Residues 2–143 enclose the Globin domain; that stretch reads SLSAKDKATV…LALALCEKYR (142 aa). An O2-binding site is contributed by His60. His89 provides a ligand contact to heme b.

The protein belongs to the globin family. Hb 1 is a heterotetramer of two alpha-1 and two beta-1 chains. In terms of tissue distribution, red blood cells.

In terms of biological role, involved in oxygen transport from gills to the various peripheral tissues. In Boreogadus saida (Polar cod), this protein is Hemoglobin subunit alpha-1 (hba1).